A 116-amino-acid polypeptide reads, in one-letter code: Distal membrane-arm assembly complex protein 1 (116 aa).

The segment at 1-39 (MGSRLSQPFESYITAPPGTAAAPAKPAPPATPGAPTSPA) is disordered. Positions 14-24 (TAPPGTAAAPA) are enriched in low complexity. A run of 2 helical transmembrane segments spans residues 52–69 (VLSGLGLMGAGGYVYWVA) and 82–104 (WTITQMVIGLSENQGIATWGIVV).

As to quaternary structure, interacts with incompletely assembled mitochondrial NADH:ubiquinone oxidoreductase complex (complex I).

Its subcellular location is the mitochondrion inner membrane. In terms of biological role, required for the assembly of the mitochondrial NADH:ubiquinone oxidoreductase complex (complex I). Involved in the assembly of the distal region of complex I. This is Distal membrane-arm assembly complex protein 1 from Homo sapiens (Human).